Consider the following 448-residue polypeptide: Exodeoxyribonuclease 7 large subunit (448 aa).

It belongs to the XseA family. As to quaternary structure, heterooligomer composed of large and small subunits.

The protein resides in the cytoplasm. The enzyme catalyses Exonucleolytic cleavage in either 5'- to 3'- or 3'- to 5'-direction to yield nucleoside 5'-phosphates.. Bidirectionally degrades single-stranded DNA into large acid-insoluble oligonucleotides, which are then degraded further into small acid-soluble oligonucleotides. This Enterococcus faecalis (strain ATCC 700802 / V583) protein is Exodeoxyribonuclease 7 large subunit.